The following is a 432-amino-acid chain: Guanine nucleotide-binding protein subunit alpha (432 aa).

Residues 1-97 (MGGCMSTPEA…SKGNKDRSNQ (97 aa)) are disordered. Gly2 is lipidated: N-myristoyl glycine. Cys4 is lipidated: S-palmitoyl cysteine. The span at 21–52 (PSTSTSSRPPQASTSATATAAGAGTSAANGTA) shows a compositional bias: low complexity. The region spanning 111 to 432 (KECKILLLGS…QNALRDSGIL (322 aa)) is the G-alpha domain. A G1 motif region spans residues 114-127 (KILLLGSGESGKST). 14 residues coordinate GTP: Glu122, Ser123, Gly124, Lys125, Ser126, Thr127, Asp230, Leu255, Thr261, Gly283, Asn349, Lys350, Asp352, and Ala404. Ser126 is a Mg(2+) binding site. The G2 motif stretch occupies residues 253-261 (DVLRARTKT). Residue Thr261 participates in Mg(2+) binding. A G3 motif region spans residues 276-285 (IHMFDVGGQR). A G4 motif region spans residues 345–352 (ILFLNKID). Residues 402 to 407 (TQATDT) form a G5 motif region.

This sequence belongs to the G-alpha family. In terms of assembly, g proteins are composed of 3 units; alpha, beta and gamma. The alpha chain contains the guanine nucleotide binding site. Mg(2+) serves as cofactor.

Its function is as follows. Guanine nucleotide-binding proteins (G proteins) are involved as modulators or transducers in various transmembrane signaling systems. Involved in the mating pathway. This Cryptococcus neoformans var. neoformans serotype D (strain B-3501A) (Filobasidiella neoformans) protein is Guanine nucleotide-binding protein subunit alpha (GPA1).